The chain runs to 292 residues: Ribosomal protein L11 methyltransferase (292 aa).

Residues threonine 136, glycine 159, aspartate 181, and asparagine 228 each coordinate S-adenosyl-L-methionine.

Belongs to the methyltransferase superfamily. PrmA family.

Its subcellular location is the cytoplasm. It carries out the reaction L-lysyl-[protein] + 3 S-adenosyl-L-methionine = N(6),N(6),N(6)-trimethyl-L-lysyl-[protein] + 3 S-adenosyl-L-homocysteine + 3 H(+). Functionally, methylates ribosomal protein L11. In Rhizobium etli (strain ATCC 51251 / DSM 11541 / JCM 21823 / NBRC 15573 / CFN 42), this protein is Ribosomal protein L11 methyltransferase.